The following is a 115-amino-acid chain: Large ribosomal subunit protein bL20 (115 aa).

The protein belongs to the bacterial ribosomal protein bL20 family.

Binds directly to 23S ribosomal RNA and is necessary for the in vitro assembly process of the 50S ribosomal subunit. It is not involved in the protein synthesizing functions of that subunit. In Prochlorococcus marinus (strain MIT 9301), this protein is Large ribosomal subunit protein bL20.